The chain runs to 597 residues: Probable tyrosine-protein phosphatase (597 aa).

Residues 55-81 (VSSSSDAAPTSISTTTTSTTSMTDASA) are compositionally biased toward low complexity. Disordered stretches follow at residues 55 to 89 (VSSS…QQVY), 107 to 172 (SFSI…PNSL), and 188 to 228 (STNG…GNNN). Over residues 107–126 (SFSIQPNQTPTMLPTSSYTL) the composition is skewed to polar residues. The segment covering 136-151 (TSSISSISSTSSNSTS) has biased composition (low complexity). Polar residues-rich tracts occupy residues 188–206 (STNG…NQPR) and 216–228 (KKST…GNNN). Residues 428–579 (GPKNVLNNLI…LMEFGDKLNN (152 aa)) enclose the Tyrosine-protein phosphatase domain. Cys-516 (phosphocysteine intermediate) is an active-site residue.

The protein belongs to the protein-tyrosine phosphatase family. Non-receptor class dual specificity subfamily.

It catalyses the reaction O-phospho-L-tyrosyl-[protein] + H2O = L-tyrosyl-[protein] + phosphate. The protein is Probable tyrosine-protein phosphatase (CPP1) of Candida albicans (strain WO-1) (Yeast).